Here is a 363-residue protein sequence, read N- to C-terminus: uncharacterized protein (363 aa).

Residues 109 to 329 (RAALRELRSR…VEELQAQTRE (221 aa)) adopt a coiled-coil conformation.

This is an uncharacterized protein from Homo sapiens (Human).